Consider the following 495-residue polypeptide: Maintenance of mitochondrial morphology protein 1 (495 aa).

Over 1–22 (MALQQHEPAPFAPQSSLSFTQG) the chain is Lumenal. Residues 23–43 (FLLGQLSVVLLIGAFIKFFIF) traverse the membrane as a helical segment. Residues 44 to 495 (GEAPPPPSRG…PVGTPGIPDN (452 aa)) are Cytoplasmic-facing. Disordered regions lie at residues 63–94 (YSSV…PSTS), 269–320 (ASTE…SPKS), 382–428 (WPRM…EPEG), and 440–495 (GLGA…IPDN). 2 stretches are compositionally biased toward polar residues: residues 65–74 (SVYSPPQDSQ) and 82–94 (STSN…PSTS). Residues 128–379 (QPESLDWFNV…EPRVQVVGLP (252 aa)) form the SMP-LTD domain. Pro residues predominate over residues 271–289 (TEPPEPLQTPAGSPAPPTS). A compositionally biased stretch (basic and acidic residues) spans 418–428 (FSDDHGREPEG). Residues 458–469 (RSSSMTRQQSGG) show a composition bias toward polar residues.

Belongs to the MMM1 family. Homodimer. Component of the ER-mitochondria encounter structure (ERMES) or MDM complex, composed of mmm1, mdm10, mdm12 and mdm34. An MMM1 homodimer associates with one molecule of mdm12 on each side in a pairwise head-to-tail manner, and the SMP-LTD domains of mmm1 and mdm12 generate a continuous hydrophobic tunnel for phospholipid trafficking.

It localises to the endoplasmic reticulum membrane. Functionally, component of the ERMES/MDM complex, which serves as a molecular tether to connect the endoplasmic reticulum (ER) and mitochondria. Components of this complex are involved in the control of mitochondrial shape and protein biogenesis, and function in nonvesicular lipid trafficking between the ER and mitochondria. The mdm12-mmm1 subcomplex functions in the major beta-barrel assembly pathway that is responsible for biogenesis of all outer membrane beta-barrel proteins, and acts in a late step after the SAM complex. The mdm10-mdm12-mmm1 subcomplex further acts in the TOM40-specific pathway after the action of the mdm12-mmm1 complex. Essential for establishing and maintaining the structure of mitochondria and maintenance of mtDNA nucleoids. This chain is Maintenance of mitochondrial morphology protein 1, found in Penicillium rubens (strain ATCC 28089 / DSM 1075 / NRRL 1951 / Wisconsin 54-1255) (Penicillium chrysogenum).